The chain runs to 628 residues: Carbon monoxide dehydrogenase 1 (628 aa).

6 residues coordinate [4Fe-4S] cluster: Cys44, Cys52, Cys53, Cys56, Cys61, and Cys75. Residues His266, Cys302, Cys340, Cys448, Cys478, and Cys519 each contribute to the [Ni-4Fe-5S] cluster site.

Belongs to the Ni-containing carbon monoxide dehydrogenase family. Homodimer. Requires [4Fe-4S] cluster as cofactor. The cofactor is [Ni-4Fe-5S] cluster.

It catalyses the reaction CO + 2 oxidized [2Fe-2S]-[ferredoxin] + H2O = 2 reduced [2Fe-2S]-[ferredoxin] + CO2 + 2 H(+). Functionally, CODH oxidizes carbon monoxide coupled, via CooF, to the reduction of a hydrogen cation by a hydrogenase (possibly CooH). This is Carbon monoxide dehydrogenase 1 (cooS1) from Methanosarcina acetivorans (strain ATCC 35395 / DSM 2834 / JCM 12185 / C2A).